We begin with the raw amino-acid sequence, 63 residues long: MKAQELRNKSVEELNGELVNLLGEQFKLRMQAATGQLQQTHQLKQVRRSIAQVKTVLTEKAGE.

This sequence belongs to the universal ribosomal protein uL29 family.

In Glaesserella parasuis serovar 5 (strain SH0165) (Haemophilus parasuis), this protein is Large ribosomal subunit protein uL29.